Consider the following 128-residue polypeptide: Fluoride-specific ion channel FluC (128 aa).

The next 4 helical transmembrane spans lie at 7–27, 34–54, 70–90, and 104–124; these read AVLL…LIAV, TGFP…IGMI, LLLA…MYEI, and LYLI…MALA. The Na(+) site is built by Gly-78 and Thr-81.

It belongs to the fluoride channel Fluc/FEX (TC 1.A.43) family.

Its subcellular location is the cell inner membrane. The catalysed reaction is fluoride(in) = fluoride(out). With respect to regulation, na(+) is not transported, but it plays an essential structural role and its presence is essential for fluoride channel function. Fluoride-specific ion channel. Important for reducing fluoride concentration in the cell, thus reducing its toxicity. In Prosthecochloris aestuarii (strain DSM 271 / SK 413), this protein is Fluoride-specific ion channel FluC.